The primary structure comprises 86 residues: Small ribosomal subunit protein bS16 (86 aa).

It belongs to the bacterial ribosomal protein bS16 family.

This is Small ribosomal subunit protein bS16 from Xylella fastidiosa (strain 9a5c).